We begin with the raw amino-acid sequence, 31 residues long: Photosystem II reaction center protein T (31 aa).

A helical transmembrane segment spans residues 3–23; the sequence is ALVYTFLLVGTLGIIFFSIFF.

Belongs to the PsbT family. PSII is composed of 1 copy each of membrane proteins PsbA, PsbB, PsbC, PsbD, PsbE, PsbF, PsbH, PsbI, PsbJ, PsbK, PsbL, PsbM, PsbT, PsbY, PsbZ, Psb30/Ycf12, at least 3 peripheral proteins of the oxygen-evolving complex and a large number of cofactors. It forms dimeric complexes.

Its subcellular location is the plastid. It is found in the chloroplast thylakoid membrane. In terms of biological role, found at the monomer-monomer interface of the photosystem II (PS II) dimer, plays a role in assembly and dimerization of PSII. PSII is a light-driven water plastoquinone oxidoreductase, using light energy to abstract electrons from H(2)O, generating a proton gradient subsequently used for ATP formation. The protein is Photosystem II reaction center protein T of Chlamydomonas reinhardtii (Chlamydomonas smithii).